The primary structure comprises 598 residues: F-box/WD repeat-containing protein 8 (598 aa).

An N-acetylmethionine modification is found at Met1. A disordered region spans residues Leu17 to Gly93. Basic and acidic residues predominate over residues Pro29 to Glu40. The span at Glu61 to Ala71 shows a compositional bias: low complexity. Residues Ser83 and Ser85 each carry the phosphoserine modification. In terms of domain architecture, F-box spans Pro113 to Leu159. WD repeat units follow at residues Ala201 to Glu250, Gln259 to Asp299, Ala300 to Glu340, Val341 to Ala383, His384 to Gly429, Asn430 to Gln475, Leu476 to Ser513, and Gly514 to Phe561.

As to quaternary structure, component of the Cul7-RING(FBXW8) complex consisting of CUL7, RBX1, SKP1 and FBXW8; within the complex interacts with CUL7 and SKP1. Interacts with GLMN isoform 1. Interacts with OBSL1, CUL1, CUL2, CCT6B, PFDN5, CCT2, CCT3, CCT6A, CCT7, VBP1, CCDC8, ARF1, TRIP13, PDCD5 and GORASP1. Interacts with MAP4K1/HPK1 (when autophosphorylated). Associated component of the 3M complex. Interacts with POUF51 (when phosphorylated on 'Ser-355'). Post-translationally, phosphorylation at Ser-85 by mTORC2 promotes FBXW8 stabilization, allowing its translocation to the cytosol in response to insulin.

Its subcellular location is the cytoplasm. It localises to the perinuclear region. The protein resides in the golgi apparatus. The protein operates within protein modification; protein ubiquitination. In terms of biological role, substrate-recognition component of the Cul7-RING(FBXW8) ubiquitin ligase complex, which mediates the ubiquitination and subsequent proteasomal degradation of target proteins. The Cul7-RING(FBXW8) complex mediates ubiquitination and consequent degradation of GORASP1, acting as a component of the ubiquitin ligase pathway that regulates Golgi morphogenesis and dendrite patterning in brain. Mediates ubiquitination and degradation of IRS1 in a mTOR-dependent manner: the Cul7-RING(FBXW8) complex recognizes and binds IRS1 previously phosphorylated by S6 kinase (RPS6KB1 or RPS6KB2). The Cul7-RING(FBXW8) complex also mediates ubiquitination of MAP4K1/HPK1: recognizes and binds autophosphorylated MAP4K1/HPK1, leading to its degradation, thereby affecting cell proliferation and differentiation. The Cul7-RING(FBXW8) complex also mediates ubiquitination of phosphorylated cyclin-D1 (CCND1). The Cul7-RING(FBXW8) complex is however not a major regulator of CCND1 stability during the G1/S transition. Associated component of the 3M complex, suggesting that it mediates some of 3M complex functions. In Homo sapiens (Human), this protein is F-box/WD repeat-containing protein 8.